The chain runs to 84 residues: Small ribosomal subunit protein bS18 (84 aa).

Belongs to the bacterial ribosomal protein bS18 family. As to quaternary structure, part of the 30S ribosomal subunit. Forms a tight heterodimer with protein bS6.

In terms of biological role, binds as a heterodimer with protein bS6 to the central domain of the 16S rRNA, where it helps stabilize the platform of the 30S subunit. This chain is Small ribosomal subunit protein bS18, found in Dictyoglomus turgidum (strain DSM 6724 / Z-1310).